The following is a 496-amino-acid chain: NADH-quinone oxidoreductase subunit N (496 aa).

14 helical membrane passes run 8 to 28 (LLST…VGLI), 37 to 57 (MFPL…YDFF), 73 to 93 (QFAG…VLST), 110 to 130 (LLLL…LLTM), 131 to 151 (YVGL…HPND), 162 to 182 (LVLG…IYGL), 203 to 223 (TILA…LVPF), 235 to 255 (PAPI…AALV), 271 to 291 (GLIL…LMAF), 300 to 320 (MAYS…AVSI), 341 to 361 (GVLF…AVIT), 386 to 406 (AAVL…AGFV), 421 to 441 (VWIA…YLSI), and 464 to 484 (FGMI…TPLA).

It belongs to the complex I subunit 2 family. As to quaternary structure, NDH-1 is composed of 14 different subunits. Subunits NuoA, H, J, K, L, M, N constitute the membrane sector of the complex.

It localises to the cell membrane. The enzyme catalyses a quinone + NADH + 5 H(+)(in) = a quinol + NAD(+) + 4 H(+)(out). Its function is as follows. NDH-1 shuttles electrons from NADH, via FMN and iron-sulfur (Fe-S) centers, to quinones in the respiratory chain. The immediate electron acceptor for the enzyme in this species is believed to be a menaquinone. Couples the redox reaction to proton translocation (for every two electrons transferred, four hydrogen ions are translocated across the cytoplasmic membrane), and thus conserves the redox energy in a proton gradient. The sequence is that of NADH-quinone oxidoreductase subunit N from Desulfitobacterium hafniense (strain DSM 10664 / DCB-2).